Consider the following 33-residue polypeptide: Glucagon-2 (33 aa).

The protein belongs to the glucagon family.

It localises to the secreted. In terms of biological role, promotes hydrolysis of glycogen and lipids, and raises the blood sugar level. This chain is Glucagon-2 (gcg2), found in Oreochromis niloticus (Nile tilapia).